The sequence spans 492 residues: NADH-quinone oxidoreductase subunit N 2 (492 aa).

Helical transmembrane passes span 16–36 (ILPE…DALI), 44–64 (PLGY…ACQA), 87–107 (FSLF…LVSF), 118–138 (GEYY…TSAT), 140–160 (LVLI…LAAM), 175–195 (FLLG…IFGA), 216–236 (PIIY…VAAA), 250–270 (PSPI…AVLL), 282–302 (FWIV…GALV), 309–329 (LLAY…AAAK), 333–353 (ISAA…AFAV), 381–401 (AAIL…GGFF), 416–438 (VWLT…RIIV), and 455–475 (PFGL…LGVL).

The protein belongs to the complex I subunit 2 family. In terms of assembly, NDH-1 is composed of 14 different subunits. Subunits NuoA, H, J, K, L, M, N constitute the membrane sector of the complex.

The protein localises to the cell inner membrane. It carries out the reaction a quinone + NADH + 5 H(+)(in) = a quinol + NAD(+) + 4 H(+)(out). NDH-1 shuttles electrons from NADH, via FMN and iron-sulfur (Fe-S) centers, to quinones in the respiratory chain. The immediate electron acceptor for the enzyme in this species is believed to be ubiquinone. Couples the redox reaction to proton translocation (for every two electrons transferred, four hydrogen ions are translocated across the cytoplasmic membrane), and thus conserves the redox energy in a proton gradient. The protein is NADH-quinone oxidoreductase subunit N 2 of Koribacter versatilis (strain Ellin345).